The following is a 231-amino-acid chain: uncharacterized protein (231 aa).

The next 7 helical transmembrane spans lie at 26-46 (TYSW…LTAQ), 56-76 (SLRL…SMFA), 84-104 (AGAL…ALLF), 112-132 (ITAF…GFVI), 142-162 (FFLF…FVGS), 163-183 (SALS…LTAY), and 206-226 (INGA…LLNI).

This sequence belongs to the BI1 family.

The protein resides in the cell membrane. This is an uncharacterized protein from Deinococcus radiodurans (strain ATCC 13939 / DSM 20539 / JCM 16871 / CCUG 27074 / LMG 4051 / NBRC 15346 / NCIMB 9279 / VKM B-1422 / R1).